The chain runs to 448 residues: Exodeoxyribonuclease 7 large subunit (448 aa).

This sequence belongs to the XseA family. As to quaternary structure, heterooligomer composed of large and small subunits.

Its subcellular location is the cytoplasm. The enzyme catalyses Exonucleolytic cleavage in either 5'- to 3'- or 3'- to 5'-direction to yield nucleoside 5'-phosphates.. In terms of biological role, bidirectionally degrades single-stranded DNA into large acid-insoluble oligonucleotides, which are then degraded further into small acid-soluble oligonucleotides. The polypeptide is Exodeoxyribonuclease 7 large subunit (Exiguobacterium sp. (strain ATCC BAA-1283 / AT1b)).